The chain runs to 216 residues: Somatotropin (216 aa).

Positions 1–26 (MAAGPRTSVLLAFTLLCLPWPQEAGA) are cleaved as a signal peptide. His-45 contributes to the Zn(2+) binding site. A disulfide bridge links Cys-78 with Cys-189. At Ser-131 the chain carries Phosphoserine. Glu-198 lines the Zn(2+) pocket. Cys-206 and Cys-214 are oxidised to a cystine.

It belongs to the somatotropin/prolactin family.

Its subcellular location is the secreted. Plays an important role in growth control. Its major role in stimulating body growth is to stimulate the liver and other tissues to secrete IGF1. It stimulates both the differentiation and proliferation of myoblasts. It also stimulates amino acid uptake and protein synthesis in muscle and other tissues. This chain is Somatotropin (GH1), found in Camelus dromedarius (Dromedary).